The primary structure comprises 204 residues: Histone chaperone ASF1A (204 aa).

The tract at residues 1-156 is interaction with histone H3, CHAF1B, and HIRA; it reads MAKVQVNNVV…TRFHINWEDN (156 aa). A Required for interaction with HIRA motif is present at residues 31 to 37; sequence IEDLSED. The tract at residues 155–204 is required for interaction with HIRA; it reads DNTEKLEDAESSNPNLPSLLSTDALPSASKGWSTSENSLNVMLESHMDCM. S192 bears the Phosphoserine; by TLK2 mark.

This sequence belongs to the ASF1 family. As to quaternary structure, interacts with histone H3 (via C-terminus), including histone H3.1, H3.2 and H3.3, and histone H4; the interaction with H3 is direct. Probably interacts with the heterodimeric form of H3-H4 taking the place of the second dimer. Interacts with the CHAF1A, CHAF1B and RBBP4 subunits of the CAF-1 complex. Interacts with CABIN1, HAT1, HIRA, NASP, TAF1 and UBN1. Found in a soluble complex with NASP and histones H3 and H4; the interaction with NASP is probably indirect and mediated by H3-H4. Interacts with CDAN1. Found in a cytosolic complex with IPO4 and histones H3 and H4. Interacts with CREBBP. Post-translationally, phosphorylated by TLK1 and TLK2. Highly phosphorylated in S-phase and at lower levels in M-phase. TLK2-mediated phosphorylation at Ser-192 prevents proteasome-dependent degradation.

The protein localises to the nucleus. In terms of biological role, histone chaperone that facilitates histone deposition and histone exchange and removal during nucleosome assembly and disassembly. Cooperates with chromatin assembly factor 1 (CAF-1) to promote replication-dependent chromatin assembly and with HIRA to promote replication-independent chromatin assembly. Promotes homologous recombination-mediated repair of double-strand breaks (DSBs) at stalled or collapsed replication forks: acts by mediating histone replacement at DSBs, leading to recruitment of the MMS22L-TONSL complex and subsequent loading of RAD51. Also involved in the nuclear import of the histone H3-H4 dimer together with importin-4 (IPO4): specifically recognizes and binds newly synthesized histones with the monomethylation of H3 'Lys-9' and acetylation at 'Lys-14' (H3K9me1K14ac) marks, and diacetylation at 'Lys-5' and 'Lys-12' of H4 (H4K5K12ac) marks in the cytosol. Required for the formation of senescence-associated heterochromatin foci (SAHF) and efficient senescence-associated cell cycle exit. This is Histone chaperone ASF1A (ASF1A) from Bos taurus (Bovine).